The sequence spans 683 residues: Leishmanolysin-like peptidase (683 aa).

Residue His-257 coordinates Zn(2+). The active site involves Glu-258. 2 residues coordinate Zn(2+): His-261 and His-364.

This sequence belongs to the peptidase M8 family. Requires Zn(2+) as cofactor.

The protein localises to the cytoplasm. Essential for the coordination of mitotic progression, and also plays a role in cell migration. This Drosophila melanogaster (Fruit fly) protein is Leishmanolysin-like peptidase (Invadolysin).